The following is a 161-amino-acid chain: Myosin regulatory light chain (161 aa).

2 positions are modified to phosphoserine: serine 13 and serine 14. EF-hand domains follow at residues 20-55, 56-91, and 93-128; these read EQVAELKEAFELFDKDRTGFIKKDALKTTCKQFGVF, VMEDQLDAMFAEADTTKSGAIGFPEFMSMMSRRMKQ, and SNEQILMNAFKTFDPEGNGYILTKDLSKALTTLGDK.

In terms of assembly, myosin is a hexamer of 2 heavy chains and 4 light chains (two regulatory light chains and two essential light chains).

In Dictyostelium discoideum (Social amoeba), this protein is Myosin regulatory light chain (mlcR).